Reading from the N-terminus, the 303-residue chain is Glycine--tRNA ligase alpha subunit (303 aa).

Belongs to the class-II aminoacyl-tRNA synthetase family. In terms of assembly, tetramer of two alpha and two beta subunits.

The protein resides in the cytoplasm. It catalyses the reaction tRNA(Gly) + glycine + ATP = glycyl-tRNA(Gly) + AMP + diphosphate. This chain is Glycine--tRNA ligase alpha subunit, found in Cronobacter sakazakii (strain ATCC BAA-894) (Enterobacter sakazakii).